Here is a 210-residue protein sequence, read N- to C-terminus: Probable glutathione peroxidase 8 (210 aa).

A helical transmembrane segment spans residues Val-21–Leu-40.

It belongs to the glutathione peroxidase family.

It is found in the membrane. It catalyses the reaction 2 glutathione + H2O2 = glutathione disulfide + 2 H2O. The chain is Probable glutathione peroxidase 8 (gpx8) from Tetraodon nigroviridis (Spotted green pufferfish).